Reading from the N-terminus, the 433-residue chain is Voltage-gated potassium channel regulatory subunit KCNG3 (433 aa).

The Cytoplasmic segment spans residues 1–165 (MTFGRGGAAS…RTFEEPTSSL (165 aa)). A helical transmembrane segment spans residues 166–187 (AAQILASVSVVFVIVSMVVLCA). Residues 188 to 217 (STLPDWRAAVADNRSLDDRSRYSASPGREP) are Extracellular-facing. Residues 218–239 (SGIIEAICIGWFTAECIVRFIV) form a helical membrane-spanning segment. The Cytoplasmic portion of the chain corresponds to 240–250 (SKNKCEFVKRP). A helical membrane pass occupies residues 251–271 (LNIIDLLAITPYYISVLMTVF). At 272–281 (TGENSQLQRA) the chain is on the extracellular side. The chain crosses the membrane as a helical; Voltage-sensor span at residues 282 to 302 (GVTLRVLRMMRIFWVIKLARH). Over 303 to 317 (FIGLQTLGLTLKRCY) the chain is Cytoplasmic. Residues 318 to 339 (REMAMLLVFICVAMAIFSALSQ) form a helical membrane-spanning segment. Over 340-357 (LLEHGLDLETSNKDFASI) the chain is Extracellular. Residues 358 to 369 (PAACWWVIISMT) constitute an intramembrane region (helical). The Selectivity filter motif lies at 370–375 (TVGYGD). The stretch at 370 to 377 (TVGYGDMY) is an intramembrane region. The Extracellular segment spans residues 378 to 384 (PITVPGR). The helical transmembrane segment at 385 to 413 (ILGGVCVVSGIVLLALPITFIYHSFVQCY) threads the bilayer. Residues 414–433 (HELKFRSARYSRSLSAEFLN) are Cytoplasmic-facing.

This sequence belongs to the potassium channel family. G (TC 1.A.1.2) subfamily. Kv6.3/KCNG3 sub-subfamily. Heterotetramer with KCNB1. Does not form homomultimers.

The protein resides in the cell membrane. It is found in the cytoplasm. Its function is as follows. Regulatory subunit of the voltage-gated potassium (Kv) channel which, when coassembled with KCNB1, modulates the kinetics parameters of the heterotetrameric channel namely the inactivation and deactivation rate. Potassium channel subunit that does not form functional channels by itself. Reduces the deactivation rate. Moderately acceleratee activation. This is Voltage-gated potassium channel regulatory subunit KCNG3 from Mus musculus (Mouse).